Reading from the N-terminus, the 145-residue chain is MRPDVFVLFTAFLGPAAAYRRTCSHTGKGEGWYIIRRGDNFNAVAADFCTSTNVLTEWNHISTITDNMVNTKIKVPCRWNAGKQRDCLKDQKSSNGWYHIVSGDELKDIAYDFCTTSGSLAGMNGISNPDYIKANTDIVVPCSWN.

Positions 1 to 18 (MRPDVFVLFTAFLGPAAA) are cleaved as a signal peptide. LysM domains follow at residues 31-75 (GWYI…KIKV) and 96-140 (GWYH…DIVV).

This sequence belongs to the secreted LysM effector family. In terms of assembly, forms homodimers in a chitin-independent manner through interactions at the N-termini of EPL2 monomers. Homodimers are further polymerized in a chitin-dependent manner.

Functionally, secreted effector that enables the plant pathogenic fungus to manipulate host defenses for successful infection. Binds chitin, suppresses chitin-induced immune responses and protects hyphae against degradation by plant hydrolytic enzymes. Chitin-induced polymerization of homodimers forms a contiguous ELP2 highly oligomeric super-complexe that may precipitate at infection sites to eliminate chitin oligomers, and thus suppress the activation of chitin-induced plant immunity. This is Secreted LysM effector Vd2LysM from Verticillium dahliae (strain VdLs.17 / ATCC MYA-4575 / FGSC 10137) (Verticillium wilt).